A 367-amino-acid polypeptide reads, in one-letter code: Anhydro-N-acetylmuramic acid kinase (367 aa).

13–20 (GTSMDGAD) serves as a coordination point for ATP.

It belongs to the anhydro-N-acetylmuramic acid kinase family.

The catalysed reaction is 1,6-anhydro-N-acetyl-beta-muramate + ATP + H2O = N-acetyl-D-muramate 6-phosphate + ADP + H(+). The protein operates within amino-sugar metabolism; 1,6-anhydro-N-acetylmuramate degradation. It participates in cell wall biogenesis; peptidoglycan recycling. Catalyzes the specific phosphorylation of 1,6-anhydro-N-acetylmuramic acid (anhMurNAc) with the simultaneous cleavage of the 1,6-anhydro ring, generating MurNAc-6-P. Is required for the utilization of anhMurNAc either imported from the medium or derived from its own cell wall murein, and thus plays a role in cell wall recycling. The sequence is that of Anhydro-N-acetylmuramic acid kinase from Neisseria gonorrhoeae (strain ATCC 700825 / FA 1090).